The following is a 63-amino-acid chain: Large ribosomal subunit protein bL32 (63 aa).

It belongs to the bacterial ribosomal protein bL32 family.

This is Large ribosomal subunit protein bL32 (rpmF) from Aquifex aeolicus (strain VF5).